The chain runs to 379 residues: Cobalt-precorrin-5B C(1)-methyltransferase (379 aa).

This sequence belongs to the CbiD family.

The enzyme catalyses Co-precorrin-5B + S-adenosyl-L-methionine = Co-precorrin-6A + S-adenosyl-L-homocysteine. It participates in cofactor biosynthesis; adenosylcobalamin biosynthesis; cob(II)yrinate a,c-diamide from sirohydrochlorin (anaerobic route): step 6/10. Catalyzes the methylation of C-1 in cobalt-precorrin-5B to form cobalt-precorrin-6A. The polypeptide is Cobalt-precorrin-5B C(1)-methyltransferase (Salmonella dublin (strain CT_02021853)).